Here is a 185-residue protein sequence, read N- to C-terminus: Elongation factor P (185 aa).

It belongs to the elongation factor P family.

It is found in the cytoplasm. The protein operates within protein biosynthesis; polypeptide chain elongation. Functionally, involved in peptide bond synthesis. Stimulates efficient translation and peptide-bond synthesis on native or reconstituted 70S ribosomes in vitro. Probably functions indirectly by altering the affinity of the ribosome for aminoacyl-tRNA, thus increasing their reactivity as acceptors for peptidyl transferase. This chain is Elongation factor P, found in Mesoplasma florum (strain ATCC 33453 / NBRC 100688 / NCTC 11704 / L1) (Acholeplasma florum).